The sequence spans 570 residues: Hydroxylamine reductase (570 aa).

Residues C5, C8, C17, and C23 each coordinate [4Fe-4S] cluster. 8 residues coordinate hybrid [4Fe-2O-2S] cluster: H266, E290, C334, C425, C453, C478, E513, and K515. C425 is modified (cysteine persulfide).

This sequence belongs to the HCP family. It depends on [4Fe-4S] cluster as a cofactor. Hybrid [4Fe-2O-2S] cluster serves as cofactor.

Its subcellular location is the cytoplasm. It catalyses the reaction A + NH4(+) + H2O = hydroxylamine + AH2 + H(+). Catalyzes the reduction of hydroxylamine to form NH(3) and H(2)O. The chain is Hydroxylamine reductase from Clostridium tetani (strain Massachusetts / E88).